We begin with the raw amino-acid sequence, 180 residues long: Nucleoside triphosphate/diphosphate phosphatase (180 aa).

Residue Arg26 is the Proton donor of the active site. The Mg(2+) site is built by Asn90, Asp106, Asp108, Asp110, Asp123, and Glu126.

The protein belongs to the Ntdp family. Mg(2+) is required as a cofactor.

The catalysed reaction is a ribonucleoside 5'-triphosphate + H2O = a ribonucleoside 5'-diphosphate + phosphate + H(+). It catalyses the reaction a ribonucleoside 5'-diphosphate + H2O = a ribonucleoside 5'-phosphate + phosphate + H(+). Its function is as follows. Has nucleoside phosphatase activity towards nucleoside triphosphates and nucleoside diphosphates. The sequence is that of Nucleoside triphosphate/diphosphate phosphatase from Staphylococcus aureus (strain Mu3 / ATCC 700698).